The following is a 150-amino-acid chain: 3-hydroxyacyl-[acyl-carrier-protein] dehydratase FabZ (150 aa).

Residue H57 is part of the active site.

Belongs to the thioester dehydratase family. FabZ subfamily.

It localises to the cytoplasm. It carries out the reaction a (3R)-hydroxyacyl-[ACP] = a (2E)-enoyl-[ACP] + H2O. In terms of biological role, involved in unsaturated fatty acids biosynthesis. Catalyzes the dehydration of short chain beta-hydroxyacyl-ACPs and long chain saturated and unsaturated beta-hydroxyacyl-ACPs. The chain is 3-hydroxyacyl-[acyl-carrier-protein] dehydratase FabZ from Actinobacillus succinogenes (strain ATCC 55618 / DSM 22257 / CCUG 43843 / 130Z).